The following is a 4004-amino-acid chain: Hybrid PKS-NRPS synthetase mpsA (4004 aa).

The Ketosynthase family 3 (KS3) domain maps to Asn5–Ser438. Active-site for beta-ketoacyl synthase activity residues include Cys178, His317, and His358. The Malonyl-CoA:ACP transacylase (MAT) domain maps to Val544 to Ser867. The segment at His933–Pro1066 is N-terminal hotdog fold. The dehydratase (DH) domain stretch occupies residues His933–Ala1233. Residues His933–Glu1234 form the PKS/mFAS DH domain. His966 serves as the catalytic Proton acceptor; for dehydratase activity. The interval Met1081–Glu1234 is C-terminal hotdog fold. The active-site Proton donor; for dehydratase activity is the Asp1141. The methyltransferase (MT) domain stretch occupies residues Glu1289–Leu1575. In terms of domain architecture, Ketoreductase (KR) spans Thr2102 to Gly2272. The 79-residue stretch at Glu2384 to Leu2462 folds into the Carrier 1 domain. Ser2422 carries the post-translational modification O-(pantetheine 4'-phosphoryl)serine. Residues Gly2471–Lys2540 form a disordered region. Over residues Pro2488–Val2500 the composition is skewed to low complexity. Positions Leu2514–Lys2540 are enriched in basic and acidic residues. Residues Pro2584–Glu3019 are condensation (C) domain. Residues Lys3060–Lys3459 form an adenylation (A) (KR) domain region. A Carrier 2 domain is found at Ala3570–Thr3647. At Ser3607 the chain carries O-(pantetheine 4'-phosphoryl)serine. Positions Leu3694–Phe3924 are reductase (RED) domain.

In the C-terminal section; belongs to the NRP synthetase family. Pantetheine 4'-phosphate is required as a cofactor.

It functions in the pathway secondary metabolite biosynthesis. Hybrid PKS-NRPS synthetase; part of the gene cluster that mediates the biosynthesis of macrophasetins, 3-decalinoyltetramic acids (DTAs) which feature a tetramate (pyrrolidine-2,4-dione) unit connected to a decalin fragment and that have potent bioactivities. The PKS-NRPS mpsA together with its associated enoylreductase partner mpsG incorporate one unit of acetyl-CoA, seven units of malonyl-CoA, and one unit of L-alanine to assemble the linear tetramic acid intermediate corresponding to the backbone of macrophasetins. Without the Diels-Alderase mpsD, the mpsA/G product can undergo the non-enzymatic intramolecular Diels-Alder (IMDA) reaction to generate both macrophasetin A and macrophasetin B. Catalyzed by mpsD, the linear tetramic acid intermediate is thoroughly converted to macrophasetin A via the endo-IMDA reaction in a regioselective and stereoselective manner. Finally, the cytochrome P450 monooxygenase mpsF catalyzes the hydroxylation at C20 to yield the end product macrophasetin C. This Macrophomina phaseolina (strain MS6) (Charcoal rot fungus) protein is Hybrid PKS-NRPS synthetase mpsA.